The sequence spans 424 residues: Serine--tRNA ligase (424 aa).

232 to 234 (TAE) is a binding site for L-serine. 263 to 265 (RKE) serves as a coordination point for ATP. Glu286 provides a ligand contact to L-serine. 350–353 (EISS) contacts ATP. Ser386 serves as a coordination point for L-serine.

This sequence belongs to the class-II aminoacyl-tRNA synthetase family. Type-1 seryl-tRNA synthetase subfamily. Homodimer. The tRNA molecule binds across the dimer.

It localises to the cytoplasm. The catalysed reaction is tRNA(Ser) + L-serine + ATP = L-seryl-tRNA(Ser) + AMP + diphosphate + H(+). It carries out the reaction tRNA(Sec) + L-serine + ATP = L-seryl-tRNA(Sec) + AMP + diphosphate + H(+). It participates in aminoacyl-tRNA biosynthesis; selenocysteinyl-tRNA(Sec) biosynthesis; L-seryl-tRNA(Sec) from L-serine and tRNA(Sec): step 1/1. Catalyzes the attachment of serine to tRNA(Ser). Is also able to aminoacylate tRNA(Sec) with serine, to form the misacylated tRNA L-seryl-tRNA(Sec), which will be further converted into selenocysteinyl-tRNA(Sec). The polypeptide is Serine--tRNA ligase (Thermodesulfovibrio yellowstonii (strain ATCC 51303 / DSM 11347 / YP87)).